Reading from the N-terminus, the 453-residue chain is Alpha-2B adrenergic receptor (453 aa).

Residues M1 to T17 are Extracellular-facing. Residues A18–V42 form a helical membrane-spanning segment. The Cytoplasmic segment spans residues L43–L54. A helical transmembrane segment spans residues F55–L80. Topologically, residues G81–C90 are extracellular. A disulfide bridge connects residues C90 and C169. Residues E91–L113 form a helical membrane-spanning segment. At D114 to K135 the chain is on the cytoplasmic side. A helical transmembrane segment spans residues C136–D158. Topologically, residues Q159–E174 are extracellular. A helical transmembrane segment spans residues A175–L198. The Cytoplasmic portion of the chain corresponds to R199–V375. The disordered stretch occupies residues A214–P329. Acidic residues predominate over residues A303–E314. Residues L376 to I399 traverse the membrane as a helical segment. At C400–H408 the chain is on the extracellular side. The helical transmembrane segment at G409–F432 threads the bilayer. Topologically, residues N433–W453 are cytoplasmic. C445 is lipidated: S-palmitoyl cysteine.

This sequence belongs to the G-protein coupled receptor 1 family. Adrenergic receptor subfamily. ADRA2B sub-subfamily. As to quaternary structure, interacts with RAB26. Interacts with PPP1R9B. Interacts with GGA1, GGA2 and GGA3.

The protein localises to the cell membrane. Its function is as follows. Alpha-2 adrenergic receptors mediate the catecholamine-induced inhibition of adenylate cyclase through the action of G proteins. This is Alpha-2B adrenergic receptor (Adra2b) from Mus musculus (Mouse).